Here is a 451-residue protein sequence, read N- to C-terminus: Adenylyltransferase and sulfurtransferase MOCS3-2 (451 aa).

The interval 42–62 (GEDSDEAEESSNDMPTPQTKL) is disordered. The segment covering 43 to 52 (EDSDEAEESS) has biased composition (acidic residues). Threonine 60 is subject to Phosphothreonine. Residues glycine 99, aspartate 120, 127-131 (SNLHR), lysine 144, and 188-189 (DN) each bind ATP. Residues cysteine 229 and cysteine 232 each coordinate Zn(2+). Cysteine 246 (glycyl thioester intermediate; for adenylyltransferase activity) is an active-site residue. 2 residues coordinate Zn(2+): cysteine 304 and cysteine 307. One can recognise a Rhodanese domain in the interval 353-449 (QSQPHLLLDV…WTGSVDATFP (97 aa)). Cysteine 408 acts as the Cysteine persulfide intermediate; for sulfurtransferase activity in catalysis.

In the N-terminal section; belongs to the HesA/MoeB/ThiF family. UBA4 subfamily. Requires Zn(2+) as cofactor.

It is found in the cytoplasm. It catalyses the reaction [molybdopterin-synthase sulfur-carrier protein]-C-terminal Gly-Gly + ATP + H(+) = [molybdopterin-synthase sulfur-carrier protein]-C-terminal Gly-Gly-AMP + diphosphate. The catalysed reaction is [molybdopterin-synthase sulfur-carrier protein]-C-terminal Gly-Gly-AMP + S-sulfanyl-L-cysteinyl-[cysteine desulfurase] + AH2 = [molybdopterin-synthase sulfur-carrier protein]-C-terminal-Gly-aminoethanethioate + L-cysteinyl-[cysteine desulfurase] + A + AMP + 2 H(+). The protein operates within tRNA modification; 5-methoxycarbonylmethyl-2-thiouridine-tRNA biosynthesis. Its pathway is cofactor biosynthesis; molybdopterin biosynthesis. In terms of biological role, plays a central role in 2-thiolation of mcm(5)S(2)U at tRNA wobble positions of cytosolic tRNA(Lys), tRNA(Glu) and tRNA(Gln). Also essential during biosynthesis of the molybdenum cofactor. Acts by mediating the C-terminal thiocarboxylation of sulfur carriers URM1 and MOCS2A. Its N-terminus first activates URM1 and MOCS2A as acyl-adenylates (-COAMP), then the persulfide sulfur on the catalytic cysteine is transferred to URM1 and MOCS2A to form thiocarboxylation (-COSH) of their C-terminus. The reaction probably involves hydrogen sulfide that is generated from the persulfide intermediate and that acts as a nucleophile towards URM1 and MOCS2A. Subsequently, a transient disulfide bond is formed. Does not use thiosulfate as sulfur donor; NFS1 probably acting as a sulfur donor for thiocarboxylation reactions. This Drosophila pseudoobscura pseudoobscura (Fruit fly) protein is Adenylyltransferase and sulfurtransferase MOCS3-2.